The sequence spans 198 residues: Acyl carrier protein phosphodiesterase (198 aa).

It belongs to the AcpH family.

It carries out the reaction holo-[ACP] + H2O = apo-[ACP] + (R)-4'-phosphopantetheine + H(+). Converts holo-ACP to apo-ACP by hydrolytic cleavage of the phosphopantetheine prosthetic group from ACP. This is Acyl carrier protein phosphodiesterase from Photorhabdus laumondii subsp. laumondii (strain DSM 15139 / CIP 105565 / TT01) (Photorhabdus luminescens subsp. laumondii).